Here is a 264-residue protein sequence, read N- to C-terminus: tRNA pseudouridine synthase A (264 aa).

Aspartate 51 acts as the Nucleophile in catalysis. Tyrosine 109 contacts substrate.

The protein belongs to the tRNA pseudouridine synthase TruA family. Homodimer.

It carries out the reaction uridine(38/39/40) in tRNA = pseudouridine(38/39/40) in tRNA. Its function is as follows. Formation of pseudouridine at positions 38, 39 and 40 in the anticodon stem and loop of transfer RNAs. This is tRNA pseudouridine synthase A from Polaromonas sp. (strain JS666 / ATCC BAA-500).